The following is a 196-amino-acid chain: Nucleoid occlusion factor SlmA (196 aa).

Residues 7–68 enclose the HTH tetR-type domain; it reads SNRREEILQA…GLIEFIEEAL (62 aa). The segment at residues 31–50 is a DNA-binding region (H-T-H motif); that stretch reads TTAKLAQQVGVSEAALYRHF. A coiled-coil region spans residues 65–142; it reads EEALMSRINR…QLRQILRERK (78 aa).

It belongs to the nucleoid occlusion factor SlmA family. Homodimer. Interacts with FtsZ.

The protein localises to the cytoplasm. The protein resides in the nucleoid. Functionally, required for nucleoid occlusion (NO) phenomenon, which prevents Z-ring formation and cell division over the nucleoid. Acts as a DNA-associated cell division inhibitor that binds simultaneously chromosomal DNA and FtsZ, and disrupts the assembly of FtsZ polymers. SlmA-DNA-binding sequences (SBS) are dispersed on non-Ter regions of the chromosome, preventing FtsZ polymerization at these regions. The chain is Nucleoid occlusion factor SlmA from Vibrio vulnificus (strain CMCP6).